A 229-amino-acid polypeptide reads, in one-letter code: Coiled-coil domain-containing protein 134 (229 aa).

A signal peptide spans 1–22 (MDLLQFLAFLFVLLLSGMGATG). Asparagine 148 is a short sequence motif (prevents secretion from ER). Asparagine 148 carries N-linked (GlcNAc...) asparagine glycosylation. The interval 193-229 (TDPFQKALREEEKRRKKEEKRKEIRKGPRISRSQSEL) is disordered. The stretch at 196–218 (FQKALREEEKRRKKEEKRKEIRK) forms a coiled coil. Positions 206–213 (RRKKEEKR) match the Nuclear localization signal motif.

Belongs to the CCDC134 family. As to quaternary structure, interacts with TADA2A. Associates with the PCAF complex via TADA2A binding. Post-translationally, O-glycosylated, with additional sialic acid modifications. As to expression, expressed in cervical gland, cervical squamous epithelium, endometrium, stomach, kidney distal convoluted tubule, spermatogenic cells in testis, mammary gland, liver and striated muscle (at protein level). Also detected in placenta. Highest expression in testis relative to other tissues. Detected in T cells and dendritic cells; highly expressed in activated CD8(+) T cells, and also expressed at lower levels in CD4(+) T cells.

It is found in the endoplasmic reticulum lumen. The protein resides in the secreted. The protein localises to the cytoplasm. Its subcellular location is the nucleus. Its function is as follows. Molecular adapter required to prevent protein hyperglycosylation of HSP90B1: during translation, associates with nascent HSP90B1 and the STT3A catalytic component of the OST-A complex and tethers them to a specialized translocon that forms a microenvironment for HSP90B1 folding. In the CCDC134-containing translocon, STT3A associates with the SRT pseudosubstrate motif of HSP90B1, preventing access to facultative glycosylation sites until folding is completed, preventing hyperglycosylation and subsequent degradation of HSP90B1. In extracellular secreted form, promotes proliferation and activation of CD8(+) T-cells, suggesting a cytokine-like function. May inhibit ERK and JNK signaling activity. May suppress cell migration and invasion activity, via its effects on ERK and JNK signaling. May also localize in the nucleus: enhances stability of the PCAF histone acetyltransferase (HAT) complex member TADA2A and thus promotes PCAF-mediated histone acetyltransferase activity. Has a critical role in the regulation of osteogenesis and bone development. This chain is Coiled-coil domain-containing protein 134, found in Homo sapiens (Human).